The chain runs to 568 residues: Zinc finger protein 583 (568 aa).

Residues 6 to 77 (LTFEDVSVNF…QKKGARDTCP (72 aa)) enclose the KRAB domain. 12 C2H2-type zinc fingers span residues 211–233 (LKCS…QRIH), 239–261 (YACV…KRIH), 267–289 (YECK…QRVH), 295–317 (YQCK…QRIH), 323–345 (FECI…QRIH), 351–373 (YVCH…QRIH), 379–401 (YECK…QRVH), 407–429 (YECK…QRVH), 435–457 (YECA…QRSH), 463–485 (YICK…QRIH), 491–513 (YECN…QRIH), and 519–541 (YECK…EKVH).

The protein belongs to the krueppel C2H2-type zinc-finger protein family.

The protein localises to the nucleus. In terms of biological role, may be involved in transcriptional regulation. The polypeptide is Zinc finger protein 583 (Znf583) (Mus musculus (Mouse)).